The sequence spans 112 residues: UPF0102 protein Cla_1413 (112 aa).

Belongs to the UPF0102 family.

The sequence is that of UPF0102 protein Cla_1413 from Campylobacter lari (strain RM2100 / D67 / ATCC BAA-1060).